The sequence spans 168 residues: uncharacterized protein (168 aa).

4Fe-4S ferredoxin-type domains follow at residues 48-78 and 91-122; these read KIPK…MIPI and KIPK…ISPI. The [4Fe-4S] cluster site is built by C58, C61, C64, C68, C100, C103, C106, and C110.

This is an uncharacterized protein from Methanocaldococcus jannaschii (strain ATCC 43067 / DSM 2661 / JAL-1 / JCM 10045 / NBRC 100440) (Methanococcus jannaschii).